The primary structure comprises 361 residues: tRNA-specific 2-thiouridylase MnmA (361 aa).

Residues 11–18 (GMSGGVDS) and Met37 each bind ATP. The Nucleophile role is filled by Cys106. Cys106 and Cys202 are joined by a disulfide. Gly130 lines the ATP pocket. An interaction with tRNA region spans residues 152 to 154 (KDQ). Cys202 functions as the Cysteine persulfide intermediate in the catalytic mechanism. The segment at 308–309 (RY) is interaction with tRNA.

This sequence belongs to the MnmA/TRMU family.

It localises to the cytoplasm. It carries out the reaction S-sulfanyl-L-cysteinyl-[protein] + uridine(34) in tRNA + AH2 + ATP = 2-thiouridine(34) in tRNA + L-cysteinyl-[protein] + A + AMP + diphosphate + H(+). In terms of biological role, catalyzes the 2-thiolation of uridine at the wobble position (U34) of tRNA, leading to the formation of s(2)U34. In Clostridium botulinum (strain Eklund 17B / Type B), this protein is tRNA-specific 2-thiouridylase MnmA.